A 459-amino-acid chain; its full sequence is Putrescine aminotransferase (459 aa).

Residues 150–151 and Q274 each bind pyridoxal 5'-phosphate; that span reads GT. The residue at position 300 (K300) is an N6-(pyridoxal phosphate)lysine. Pyridoxal 5'-phosphate is bound at residue T332.

It belongs to the class-III pyridoxal-phosphate-dependent aminotransferase family. Putrescine aminotransferase subfamily. The cofactor is pyridoxal 5'-phosphate.

It carries out the reaction an alkane-alpha,omega-diamine + 2-oxoglutarate = an omega-aminoaldehyde + L-glutamate. The catalysed reaction is putrescine + 2-oxoglutarate = 1-pyrroline + L-glutamate + H2O. The enzyme catalyses cadaverine + 2-oxoglutarate = 5-aminopentanal + L-glutamate. The protein operates within amine and polyamine degradation; putrescine degradation; 4-aminobutanal from putrescine (transaminase route): step 1/1. In terms of biological role, catalyzes the aminotransferase reaction from putrescine to 2-oxoglutarate, leading to glutamate and 4-aminobutanal, which spontaneously cyclizes to form 1-pyrroline. This is the first step in one of two pathways for putrescine degradation, where putrescine is converted into 4-aminobutanoate (gamma-aminobutyrate or GABA) via 4-aminobutanal. Also functions as a cadaverine transaminase in a a L-lysine degradation pathway to succinate that proceeds via cadaverine, glutarate and L-2-hydroxyglutarate. In Salmonella heidelberg (strain SL476), this protein is Putrescine aminotransferase.